The chain runs to 92 residues: Phenol 2-monooxygenase, auxiliary component DmpK (92 aa).

Homotrimer or homotetramer. Interacts with the phenol hydroxylase components DmpL (P1 component) and DmpN (P3 component).

The protein operates within aromatic compound metabolism; phenol degradation. DmpK is an auxiliary protein associated with the multicomponent phenol hydroxylase DmpLMNOP and it may be involved in the post-translational incorporation of iron into the oxygenase component of the phenol hydroxylase. Required for growth on phenol but not for in vitro phenol hydroxylase activity. This chain is Phenol 2-monooxygenase, auxiliary component DmpK, found in Pseudomonas sp. (strain CF600).